A 428-amino-acid polypeptide reads, in one-letter code: Acylglycerol kinase, mitochondrial (428 aa).

The segment at 18–34 (STVGFCLLAYGSHWLYG) is hydrophobic. Residues 61–202 (SAIKKATVFL…LDVLQIKGEQ (142 aa)) form the DAGKc domain.

The protein belongs to the AGK family. As to quaternary structure, component of the TIM22 complex. It depends on Mg(2+) as a cofactor.

It localises to the mitochondrion inner membrane. Its subcellular location is the mitochondrion intermembrane space. The enzyme catalyses a monoacylglycerol + ATP = a monoacyl-sn-glycero-3-phosphate + ADP + H(+). It catalyses the reaction a 1,2-diacyl-sn-glycerol + ATP = a 1,2-diacyl-sn-glycero-3-phosphate + ADP + H(+). The catalysed reaction is an N-acylsphing-4-enine + ATP = an N-acylsphing-4-enine 1-phosphate + ADP + H(+). It carries out the reaction 1-(9Z-octadecenoyl)-sn-glycerol + ATP = 1-(9Z-octadecenoyl)-sn-glycero-3-phosphate + ADP + H(+). The enzyme catalyses 1,2-di-(9Z-octadecenoyl)-sn-glycerol + ATP = 1,2-di-(9Z-octadecenoyl)-sn-glycero-3-phosphate + ADP + H(+). It catalyses the reaction a 1-acyl-sn-glycerol + ATP = a 1-acyl-sn-glycero-3-phosphate + ADP + H(+). The catalysed reaction is 1-hexadecanoyl-sn-glycerol + ATP = 1-hexadecanoyl-sn-glycero-3-phosphate + ADP + H(+). It carries out the reaction a 2-acylglycerol + ATP = a 2-acyl-sn-glycerol 3-phosphate + ADP + H(+). The enzyme catalyses 2-(5Z,8Z,11Z,14Z-eicosatetraenoyl)-glycerol + ATP = 2-(5Z,8Z,11Z,14Z-eicosatetraenoyl)-sn-glycero-3-phosphate + ADP + H(+). It catalyses the reaction 1-(5Z,8Z,11Z,14Z-eicosatetraenoyl)-sn-glycerol + ATP = 1-(5Z,8Z,11Z,14Z-eicosatetraenoyl)-sn-glycero-3-phosphate + ADP + H(+). The catalysed reaction is N-(hexanoyl)sphing-4-enine + ATP = N-hexanoylsphing-4-enine 1-phosphate + ADP + H(+). Its pathway is lipid metabolism; glycerolipid metabolism. In terms of biological role, lipid kinase that can phosphorylate both monoacylglycerol and diacylglycerol to form lysophosphatidic acid (LPA) and phosphatidic acid (PA), respectively. Phosphorylates ceramide but not sphingosine. Phosphorylates 1,2-dioleoylglycerol more rapidly than 2,3-dioleoylglycerol. Independently of its lipid kinase activity, acts as a component of the TIM22 complex. The TIM22 complex mediates the import and insertion of multi-pass transmembrane proteins into the mitochondrial inner membrane by forming a twin-pore translocase that uses the membrane potential as the external driving force. The chain is Acylglycerol kinase, mitochondrial from Xenopus laevis (African clawed frog).